Here is a 688-residue protein sequence, read N- to C-terminus: Glycine--tRNA ligase beta subunit (688 aa).

It belongs to the class-II aminoacyl-tRNA synthetase family. In terms of assembly, tetramer of two alpha and two beta subunits.

The protein resides in the cytoplasm. The enzyme catalyses tRNA(Gly) + glycine + ATP = glycyl-tRNA(Gly) + AMP + diphosphate. The chain is Glycine--tRNA ligase beta subunit from Shewanella sp. (strain ANA-3).